The chain runs to 153 residues: 6,7-dimethyl-8-ribityllumazine synthase (153 aa).

Residues phenylalanine 22, 56–58 (AFE), and 80–82 (AVI) each bind 5-amino-6-(D-ribitylamino)uracil. 85-86 (ST) is a (2S)-2-hydroxy-3-oxobutyl phosphate binding site. Residue histidine 88 is the Proton donor of the active site. Phenylalanine 113 is a 5-amino-6-(D-ribitylamino)uracil binding site. Arginine 127 is a binding site for (2S)-2-hydroxy-3-oxobutyl phosphate.

This sequence belongs to the DMRL synthase family.

The enzyme catalyses (2S)-2-hydroxy-3-oxobutyl phosphate + 5-amino-6-(D-ribitylamino)uracil = 6,7-dimethyl-8-(1-D-ribityl)lumazine + phosphate + 2 H2O + H(+). The protein operates within cofactor biosynthesis; riboflavin biosynthesis; riboflavin from 2-hydroxy-3-oxobutyl phosphate and 5-amino-6-(D-ribitylamino)uracil: step 1/2. Its function is as follows. Catalyzes the formation of 6,7-dimethyl-8-ribityllumazine by condensation of 5-amino-6-(D-ribitylamino)uracil with 3,4-dihydroxy-2-butanone 4-phosphate. This is the penultimate step in the biosynthesis of riboflavin. This is 6,7-dimethyl-8-ribityllumazine synthase from Clostridium botulinum (strain Eklund 17B / Type B).